We begin with the raw amino-acid sequence, 228 residues long: UPF0173 metal-dependent hydrolase Dred_1740 (228 aa).

The protein belongs to the UPF0173 family.

This is UPF0173 metal-dependent hydrolase Dred_1740 from Desulforamulus reducens (strain ATCC BAA-1160 / DSM 100696 / MI-1) (Desulfotomaculum reducens).